The chain runs to 256 residues: Acetyl-coenzyme A carboxylase carboxyl transferase subunit alpha (256 aa).

The CoA carboxyltransferase C-terminal domain maps to 1-236 (MSDVARILKE…KTAIVDELAE (236 aa)).

This sequence belongs to the AccA family. Acetyl-CoA carboxylase is a heterohexamer composed of biotin carboxyl carrier protein (AccB), biotin carboxylase (AccC) and two subunits each of ACCase subunit alpha (AccA) and ACCase subunit beta (AccD).

It localises to the cytoplasm. It carries out the reaction N(6)-carboxybiotinyl-L-lysyl-[protein] + acetyl-CoA = N(6)-biotinyl-L-lysyl-[protein] + malonyl-CoA. It participates in lipid metabolism; malonyl-CoA biosynthesis; malonyl-CoA from acetyl-CoA: step 1/1. In terms of biological role, component of the acetyl coenzyme A carboxylase (ACC) complex. First, biotin carboxylase catalyzes the carboxylation of biotin on its carrier protein (BCCP) and then the CO(2) group is transferred by the carboxyltransferase to acetyl-CoA to form malonyl-CoA. The chain is Acetyl-coenzyme A carboxylase carboxyl transferase subunit alpha from Streptococcus thermophilus (strain CNRZ 1066).